The primary structure comprises 63 residues: Large ribosomal subunit protein bL28 (63 aa).

The protein belongs to the bacterial ribosomal protein bL28 family.

This is Large ribosomal subunit protein bL28 from Clostridium novyi (strain NT).